Reading from the N-terminus, the 451-residue chain is Tubulin alpha chain (451 aa).

Position 11 (Q11) interacts with GTP. K40 is modified (N6-acetyllysine). Positions 71, 144, 145, 179, 206, and 228 each coordinate GTP. E71 contacts Mg(2+). The active site involves E254.

Belongs to the tubulin family. In terms of assembly, dimer of alpha and beta chains. A typical microtubule is a hollow water-filled tube with an outer diameter of 25 nm and an inner diameter of 15 nM. Alpha-beta heterodimers associate head-to-tail to form protofilaments running lengthwise along the microtubule wall with the beta-tubulin subunit facing the microtubule plus end conferring a structural polarity. Microtubules usually have 13 protofilaments but different protofilament numbers can be found in some organisms and specialized cells. Mg(2+) is required as a cofactor. Undergoes a tyrosination/detyrosination cycle, the cyclic removal and re-addition of a C-terminal tyrosine residue by the enzymes tubulin tyrosine carboxypeptidase (TTCP) and tubulin tyrosine ligase (TTL), respectively. In terms of processing, acetylation of alpha chains at Lys-40 stabilizes microtubules and affects affinity and processivity of microtubule motors. This modification has a role in multiple cellular functions, ranging from cell motility, cell cycle progression or cell differentiation to intracellular trafficking and signaling.

It is found in the cytoplasm. The protein localises to the cytoskeleton. The catalysed reaction is GTP + H2O = GDP + phosphate + H(+). Its function is as follows. Tubulin is the major constituent of microtubules, a cylinder consisting of laterally associated linear protofilaments composed of alpha- and beta-tubulin heterodimers. Microtubules grow by the addition of GTP-tubulin dimers to the microtubule end, where a stabilizing cap forms. Below the cap, tubulin dimers are in GDP-bound state, owing to GTPase activity of alpha-tubulin. This chain is Tubulin alpha chain, found in Trypanosoma cruzi.